A 158-amino-acid polypeptide reads, in one-letter code: MLTHLDSRGHAHMVDVTDKASTAREAEAEAWVRMRPETLELIQKGGHPKGDVFAVARIAGIMAAKKTHELIPLCHPLLLTGIKVELSAEGEDRVRIVARCKLAGQTGVEMEALTAASVAALTLYDMCKAVDRGLLIEQVRLLEKKGGKSGHYQAGQAM.

Substrate-binding positions include 73–75 (LCH) and 110–111 (ME). The active site involves D125.

The protein belongs to the MoaC family. As to quaternary structure, homohexamer; trimer of dimers.

The enzyme catalyses (8S)-3',8-cyclo-7,8-dihydroguanosine 5'-triphosphate = cyclic pyranopterin phosphate + diphosphate. It participates in cofactor biosynthesis; molybdopterin biosynthesis. In terms of biological role, catalyzes the conversion of (8S)-3',8-cyclo-7,8-dihydroguanosine 5'-triphosphate to cyclic pyranopterin monophosphate (cPMP). The chain is Cyclic pyranopterin monophosphate synthase from Azotobacter vinelandii (strain DJ / ATCC BAA-1303).